A 660-amino-acid chain; its full sequence is MSAIESVLQERRVFQPSAEVAAQATVSGMDAYKALVAEAERDYEGFWGRLARETLSWNKPFTKVLDESNAPFYKWYDDGELNASYNSIDRHVEAGNGERVAIIFEADDGTITNVTYNDLLQRVSRFANALKQRGIKKGDRVVIYMPMSVEGIVAMQACARIGATHSVVFGGFSSKSLNERLVDVGAVALVTSDEQMRGGKALPLKNIADEALAMGGCEAVKSVIVYQRTGGKIGWDDKRDLWMHEITASESDHCPPEWVGAEHPLFILYTSGSTGKPKGVQHSTGGYLLWAAQTMKWTFDWKPTDVFWCTADIGWVTGHSYITYGPLTLGGTQVVFEGVPTYPNAGRFWDMIQKHKVTVFYTAPTAIRSLIKAAEADPKVHPKSYDLSTLRIIGTVGEPINPEAWVWYYENVGGSRCPIVDTWWQTETGGHMITPLPGATPLVPGSCTLPLPGIMAAVVDETGQDVPNGQGGILVVKRPWPSMIRTIWGDPERYKKSYFPEELGGTLYLAGDGSVRDKETGYFTIMGRIDDVLNVSGHRLGTMEIESALVANPLVAEAAVVGRPDDTTGEAVCAFVVLKRARPEGEEAAKIAADLRNWVGKEIGPIAKPKDIRFGDNLPKTRSGKIMRRLLRSLAKGEEITQDVSTLENPAILDQLGESR.

Residues 197-200 (RGGK) and Thr317 each bind CoA. ATP-binding positions include 397–399 (GEP), 421–426 (DTWWQT), Asp512, and Arg528. Ser536 serves as a coordination point for CoA. Arg539 serves as a coordination point for ATP. Mg(2+)-binding residues include Val550 and Val555. The residue at position 625 (Lys625) is an N6-acetyllysine.

The protein belongs to the ATP-dependent AMP-binding enzyme family. The cofactor is Mg(2+). In terms of processing, acetylated. Deacetylation by the SIR2-homolog deacetylase activates the enzyme.

It catalyses the reaction acetate + ATP + CoA = acetyl-CoA + AMP + diphosphate. Its function is as follows. Catalyzes the conversion of acetate into acetyl-CoA (AcCoA), an essential intermediate at the junction of anabolic and catabolic pathways. AcsA undergoes a two-step reaction. In the first half reaction, AcsA combines acetate with ATP to form acetyl-adenylate (AcAMP) intermediate. In the second half reaction, it can then transfer the acetyl group from AcAMP to the sulfhydryl group of CoA, forming the product AcCoA. In Paraburkholderia phymatum (strain DSM 17167 / CIP 108236 / LMG 21445 / STM815) (Burkholderia phymatum), this protein is Acetyl-coenzyme A synthetase.